A 97-amino-acid chain; its full sequence is C-C motif chemokine 7 (97 aa).

Residues 1–23 (MQISAALLCVLLTAAAFTVHVWA) form the signal peptide. Gln-24 carries the post-translational modification Pyrrolidone carboxylic acid. The N-linked (GlcNAc...) asparagine glycan is linked to Asn-29. 2 cysteine pairs are disulfide-bonded: Cys-33-Cys-57 and Cys-34-Cys-73.

The protein belongs to the intercrine beta (chemokine CC) family. As to quaternary structure, monomer. Interacts with TNFAIP6 (via Link domain).

The protein resides in the secreted. Its function is as follows. Chemotactic factor that attracts monocytes and eosinophils, but not neutrophils. Augments monocyte anti-tumor activity. This chain is C-C motif chemokine 7 (Ccl7), found in Rattus norvegicus (Rat).